Reading from the N-terminus, the 454-residue chain is CBL-interacting protein kinase 4 (454 aa).

Residues 25–284 (YELGRMLGRG…ESLAAHHPWF (260 aa)) form the Protein kinase domain. ATP is bound by residues 31 to 39 (LGRGTFAKV) and Lys-54. The active-site Proton acceptor is Asp-151. The tract at residues 169 to 198 (DFGLAALPDTLRDDGRLHTACGTPAYAAPE) is activation loop. Residues 311–335 (APPPPLNAFDIISMSPGLDLSGLFG) form the NAF domain. The segment at 341 to 370 (LREKRFTTTASPEKTLEQLGLAGGKLGYVV) is PPI.

This sequence belongs to the protein kinase superfamily. CAMK Ser/Thr protein kinase family. SNF1 subfamily. It depends on Mn(2+) as a cofactor.

The catalysed reaction is L-seryl-[protein] + ATP = O-phospho-L-seryl-[protein] + ADP + H(+). It carries out the reaction L-threonyl-[protein] + ATP = O-phospho-L-threonyl-[protein] + ADP + H(+). CIPK serine-threonine protein kinases interact with CBL proteins. Binding of a CBL protein to the regulatory NAF domain of CIPK protein lead to the activation of the kinase in a calcium-dependent manner. In Oryza sativa subsp. japonica (Rice), this protein is CBL-interacting protein kinase 4 (CIPK4).